Consider the following 246-residue polypeptide: Phycocyanobilin:ferredoxin oxidoreductase (246 aa).

This sequence belongs to the HY2 family.

The catalysed reaction is (2R,3Z)-phycocyanobilin + 4 oxidized [2Fe-2S]-[ferredoxin] = biliverdin IXalpha + 4 reduced [2Fe-2S]-[ferredoxin] + 4 H(+). Functionally, catalyzes the four-electron reduction of biliverdin IX-alpha (2-electron reduction at both the A and D rings); the reaction proceeds via an isolatable 2-electron intermediate, 181,182-dihydrobiliverdin. This is Phycocyanobilin:ferredoxin oxidoreductase from Crocosphaera subtropica (strain ATCC 51142 / BH68) (Cyanothece sp. (strain ATCC 51142)).